Reading from the N-terminus, the 256-residue chain is Trypsin alpha (256 aa).

The N-terminal stretch at 1 to 22 (MLKIVILLSAVVCALGGTVPEG) is a signal peptide. The propeptide at 23 to 30 (LLPQLDGR) is activation peptide. The Peptidase S1 domain occupies 31–254 (IVGGSATTIS…LRSWVVSTAN (224 aa)). Residues Cys-56 and Cys-72 are joined by a disulfide bond. Residues His-71 and Asp-116 each act as charge relay system in the active site. 2 disulfide bridges follow: Cys-180–Cys-197 and Cys-206–Cys-230. The Charge relay system role is filled by Ser-210.

It belongs to the peptidase S1 family. Synthesized in the midgut of both larvae and adults, primarily in the ventriculus and gastric caeca.

It is found in the secreted. The protein localises to the extracellular space. The enzyme catalyses Preferential cleavage: Arg-|-Xaa, Lys-|-Xaa.. This Drosophila melanogaster (Fruit fly) protein is Trypsin alpha (alphaTry).